The chain runs to 83 residues: UPF0512 protein I (83 aa).

It belongs to the UPF0512 family.

The polypeptide is UPF0512 protein I (Dictyostelium discoideum (Social amoeba)).